Reading from the N-terminus, the 184-residue chain is ATP synthase subunit b (184 aa).

Residues Ile-25–Val-45 form a helical membrane-spanning segment.

Belongs to the ATPase B chain family. In terms of assembly, F-type ATPases have 2 components, F(1) - the catalytic core - and F(0) - the membrane proton channel. F(1) has five subunits: alpha(3), beta(3), gamma(1), delta(1), epsilon(1). F(0) has three main subunits: a(1), b(2) and c(10-14). The alpha and beta chains form an alternating ring which encloses part of the gamma chain. F(1) is attached to F(0) by a central stalk formed by the gamma and epsilon chains, while a peripheral stalk is formed by the delta and b chains.

It is found in the cell membrane. Functionally, f(1)F(0) ATP synthase produces ATP from ADP in the presence of a proton or sodium gradient. F-type ATPases consist of two structural domains, F(1) containing the extramembraneous catalytic core and F(0) containing the membrane proton channel, linked together by a central stalk and a peripheral stalk. During catalysis, ATP synthesis in the catalytic domain of F(1) is coupled via a rotary mechanism of the central stalk subunits to proton translocation. Its function is as follows. Component of the F(0) channel, it forms part of the peripheral stalk, linking F(1) to F(0). This Mycoplasma mobile (strain ATCC 43663 / 163K / NCTC 11711) (Mesomycoplasma mobile) protein is ATP synthase subunit b.